The sequence spans 70 residues: Large ribosomal subunit protein bL31 (70 aa).

The Zn(2+) site is built by cysteine 16, cysteine 18, cysteine 37, and cysteine 40. The segment at 48–70 (QRQASSGGRVDKFNKRFGALGSK) is disordered.

The protein belongs to the bacterial ribosomal protein bL31 family. Type A subfamily. In terms of assembly, part of the 50S ribosomal subunit. Requires Zn(2+) as cofactor.

Its function is as follows. Binds the 23S rRNA. The sequence is that of Large ribosomal subunit protein bL31 from Photobacterium profundum (strain SS9).